A 120-amino-acid chain; its full sequence is MADEKEQQGEQGYQLQSQHFYKIITSYMPESFEQDAVQIALIAVDKYRQLKDIAFYIKHEYDKKYPGSGKATEGVYHCIVGKSFASAVSHETRQFIHMKVDTYHVILWKSKDTPFTPGGE.

It belongs to the dynein light chain family. In terms of assembly, consists of at least 3 heavy chains (alpha, beta and gamma), 2 intermediate chains and 8 light chains.

Its subcellular location is the cytoplasm. It is found in the cytoskeleton. The protein resides in the flagellum axoneme. In Chlamydomonas reinhardtii (Chlamydomonas smithii), this protein is Dynein 11 kDa light chain, flagellar outer arm.